Reading from the N-terminus, the 126-residue chain is Nascent polypeptide-associated complex protein (126 aa).

Positions 10–77 (PRMMKQMQKM…AKKVAKEEEK (68 aa)) constitute an NAC-A/B domain.

This sequence belongs to the NAC-alpha family. In terms of assembly, homodimer. Interacts with the ribosome. Binds ribosomal RNA.

Contacts the emerging nascent chain on the ribosome. In Methanococcus maripaludis (strain DSM 14266 / JCM 13030 / NBRC 101832 / S2 / LL), this protein is Nascent polypeptide-associated complex protein.